A 404-amino-acid polypeptide reads, in one-letter code: Cysteine desulfurase IscS (404 aa).

Pyridoxal 5'-phosphate contacts are provided by residues 75 to 76 (AT), asparagine 155, glutamine 183, and 203 to 205 (SAH). Lysine 206 carries the N6-(pyridoxal phosphate)lysine modification. Threonine 243 provides a ligand contact to pyridoxal 5'-phosphate. Cysteine 328 functions as the Cysteine persulfide intermediate in the catalytic mechanism. Cysteine 328 provides a ligand contact to [2Fe-2S] cluster.

Belongs to the class-V pyridoxal-phosphate-dependent aminotransferase family. NifS/IscS subfamily. Homodimer. Forms a heterotetramer with IscU, interacts with other sulfur acceptors. Requires pyridoxal 5'-phosphate as cofactor.

The protein localises to the cytoplasm. The enzyme catalyses (sulfur carrier)-H + L-cysteine = (sulfur carrier)-SH + L-alanine. It participates in cofactor biosynthesis; iron-sulfur cluster biosynthesis. Master enzyme that delivers sulfur to a number of partners involved in Fe-S cluster assembly, tRNA modification or cofactor biosynthesis. Catalyzes the removal of elemental sulfur atoms from cysteine to produce alanine. Functions as a sulfur delivery protein for Fe-S cluster synthesis onto IscU, an Fe-S scaffold assembly protein, as well as other S acceptor proteins. In Vibrio campbellii (strain ATCC BAA-1116), this protein is Cysteine desulfurase IscS.